Reading from the N-terminus, the 115-residue chain is NAD(P)H-quinone oxidoreductase subunit M (115 aa).

Belongs to the complex I NdhM subunit family. In terms of assembly, NDH-1 can be composed of about 15 different subunits; different subcomplexes with different compositions have been identified which probably have different functions.

It is found in the cellular thylakoid membrane. It catalyses the reaction a plastoquinone + NADH + (n+1) H(+)(in) = a plastoquinol + NAD(+) + n H(+)(out). It carries out the reaction a plastoquinone + NADPH + (n+1) H(+)(in) = a plastoquinol + NADP(+) + n H(+)(out). Functionally, NDH-1 shuttles electrons from an unknown electron donor, via FMN and iron-sulfur (Fe-S) centers, to quinones in the respiratory and/or the photosynthetic chain. The immediate electron acceptor for the enzyme in this species is believed to be plastoquinone. Couples the redox reaction to proton translocation, and thus conserves the redox energy in a proton gradient. Cyanobacterial NDH-1 also plays a role in inorganic carbon-concentration. The sequence is that of NAD(P)H-quinone oxidoreductase subunit M from Synechococcus sp. (strain CC9902).